The sequence spans 823 residues: Zygotic DNA replication licensing factor mcm6-A (823 aa).

Residues 159 to 186 (CLDCQTLVRDVEQQFKYTQPSICRNPVC) form a C4-type zinc finger. One can recognise an MCM domain in the interval 347 to 554 (LYHNLCTSLF…TDYAIARRIV (208 aa)). 397-404 (GDPSTAKS) is a binding site for ATP. Positions 529 to 532 (SRFD) match the Arginine finger motif. A disordered region spans residues 663 to 710 (PDVNLDQDDEHEPEDETQEGTNGDAEVPNGVNGHVNGINGHSQESNAA). Residues 667-680 (LDQDDEHEPEDETQ) are compositionally biased toward acidic residues. The segment covering 691–703 (NGVNGHVNGINGH) has biased composition (low complexity).

The protein belongs to the MCM family. As to quaternary structure, component of the mcm2-7 complex (RLF-M). The complex forms a toroidal hexameric ring with the proposed subunit order mcm2-mcm6-mcm4-mcm7-mcm3-mcm5 (By simililarity). Begins to associate with zmcm3, mcm4 and mcm7 into mcm complexes at the neurula stage. May replace mmcm6 in the complex that functions during licensing of DNA replication.

The protein resides in the nucleus. It carries out the reaction ATP + H2O = ADP + phosphate + H(+). In terms of biological role, acts as a component of the mcm2-7 complex (mcm complex) which is the putative replicative helicase essential for 'once per cell cycle' DNA replication initiation and elongation in eukaryotic cells. The active ATPase sites in the mcm2-7 ring are formed through the interaction surfaces of two neighboring subunits such that a critical structure of a conserved arginine finger motif is provided in trans relative to the ATP-binding site of the Walker A box of the adjacent subunit. The six ATPase active sites, however, are likely to contribute differentially to the complex helicase activity. The existence of maternal and zygotic forms of mcm3 and mcm6 suggests that specific forms of mcm2-7 complexes may be used during different stages of development. May replace mmcm6 in the mcm2-7 complex. This chain is Zygotic DNA replication licensing factor mcm6-A (zmcm6-a), found in Xenopus laevis (African clawed frog).